The primary structure comprises 81 residues: Beta-catenin-interacting protein 1 (81 aa).

Ser59 carries the phosphoserine modification.

It belongs to the CTNNBIP1 family. In terms of assembly, binds CTNNB1.

Its subcellular location is the cytoplasm. It localises to the nucleus. In terms of biological role, prevents the interaction between CTNNB1 and TCF family members, and acts as a negative regulator of the Wnt signaling pathway. This Bos taurus (Bovine) protein is Beta-catenin-interacting protein 1 (CTNNBIP1).